Reading from the N-terminus, the 543-residue chain is Probable protein kinase UbiB (543 aa).

The Protein kinase domain maps to 123–501; the sequence is DFDQQALASA…RVRQGQSRYL (379 aa). Residues 129–137 and lysine 152 each bind ATP; that span reads LASASIAQV. Catalysis depends on aspartate 287, which acts as the Proton acceptor. Transmembrane regions (helical) follow at residues 498–518 and 519–539; these read SRYL…LLSG and DVEV…VIGW.

It belongs to the ABC1 family. UbiB subfamily.

The protein resides in the cell inner membrane. It functions in the pathway cofactor biosynthesis; ubiquinone biosynthesis [regulation]. Functionally, is probably a protein kinase regulator of UbiI activity which is involved in aerobic coenzyme Q (ubiquinone) biosynthesis. The polypeptide is Probable protein kinase UbiB (Serratia proteamaculans (strain 568)).